The following is a 252-amino-acid chain: Methylthioribulose-1-phosphate dehydratase (252 aa).

Substrate is bound at residue Cys105. Zn(2+) contacts are provided by His123 and His125. The active-site Proton donor/acceptor is the Glu151. His208 is a binding site for Zn(2+).

It belongs to the aldolase class II family. MtnB subfamily. It depends on Zn(2+) as a cofactor.

Its subcellular location is the cytoplasm. It carries out the reaction 5-(methylsulfanyl)-D-ribulose 1-phosphate = 5-methylsulfanyl-2,3-dioxopentyl phosphate + H2O. Its pathway is amino-acid biosynthesis; L-methionine biosynthesis via salvage pathway; L-methionine from S-methyl-5-thio-alpha-D-ribose 1-phosphate: step 2/6. Functionally, catalyzes the dehydration of methylthioribulose-1-phosphate (MTRu-1-P) into 2,3-diketo-5-methylthiopentyl-1-phosphate (DK-MTP-1-P). The sequence is that of Methylthioribulose-1-phosphate dehydratase from Sclerotinia sclerotiorum (strain ATCC 18683 / 1980 / Ss-1) (White mold).